Here is a 561-residue protein sequence, read N- to C-terminus: Arginine--tRNA ligase (561 aa).

The short motif at 129-139 is the 'HIGH' region element; the sequence is ANPTGPLHIGH.

This sequence belongs to the class-I aminoacyl-tRNA synthetase family. Monomer.

It is found in the cytoplasm. The enzyme catalyses tRNA(Arg) + L-arginine + ATP = L-arginyl-tRNA(Arg) + AMP + diphosphate. This chain is Arginine--tRNA ligase, found in Geotalea uraniireducens (strain Rf4) (Geobacter uraniireducens).